The following is a 302-amino-acid chain: MVPSSKAVVFARQMAKQIRVTTPSMSATRFLSTGDNGQVDEQQNPPEPLPNRPLRGERSSNSHREPPARQAHNLGKSDTTLSDDGFLEQFKLGVNQDSRETPKPEQYPQEPLPPPEDSDEIFKKMKEGGLIPNAVAMLDGLCKDGLVQEAMKLFGLMRDKGTIPEVVIYTAVVEAFCKAHKIEDAKRIFRKMQNNGIAPNAFSYGVLVQGLYNCNMLDDAVAFCSEMLESGHSPNVPTFVELVDALCRVKGVEQAQSAIDTLNQKGFAVNVKAVKEFMDKRAPFPSLAWEAIFKKKPTEKPF.

Residues 26–40 (SATRFLSTGDNGQVD) show a composition bias toward polar residues. Disordered stretches follow at residues 26 to 82 (SATR…TTLS) and 94 to 116 (VNQDSRETPKPEQYPQEPLPPPE). Over residues 54 to 67 (LRGERSSNSHREPP) the composition is skewed to basic and acidic residues. PPR repeat units follow at residues 130–164 (LIPNAVAMLDGLCKDGLVQEAMKLFGLMRDKGTIP), 165–199 (EVVIYTAVVEAFCKAHKIEDAKRIFRKMQNNGIAP), 200–234 (NAFSYGVLVQGLYNCNMLDDAVAFCSEMLESGHSP), and 235–269 (NVPTFVELVDALCRVKGVEQAQSAIDTLNQKGFAV).

The protein belongs to the PPR family. P subfamily.

This is Pentatricopeptide repeat-containing protein At4g38150 from Arabidopsis thaliana (Mouse-ear cress).